The sequence spans 526 residues: Estrogen receptor beta (526 aa).

The interval 1–145 is modulating; the sequence is MDIKNSPSNL…SPSSKRDAHF (145 aa). S84 and S102 each carry phosphoserine; by MAPK. 2 NR C4-type zinc fingers span residues 146–166 and 182–206; these read CAVCSDYASGYHYGVWSCEGC and CPATNQCTIDKNRRKSCQACRLRKC. Residues 146 to 211 constitute a DNA-binding region (nuclear receptor); sequence CAVCSDYASG…RLRKCYEVGM (66 aa). The NR LBD domain occupies 261–494; the sequence is SPEQLVLTLL…DLLLEMLNAH (234 aa). The disordered stretch occupies residues 502 to 526; sequence LVTGSERSRMEESESKEGSQKPQAQ. A compositionally biased stretch (basic and acidic residues) spans 507 to 520; the sequence is ERSRMEESESKEGS.

It belongs to the nuclear hormone receptor family. NR3 subfamily. Binds DNA as a homodimer. Can form a heterodimer with ESR1. Interacts with NCOA1, NCOA3, NCOA5 and NCOA6 coactivators, leading to a strong increase of transcription of target genes. Interacts with UBE1C and AKAP13. Interacts with DNTTIP2. Interacts with CCDC62 in the presence of estradiol/E2; this interaction seems to enhance the transcription of target genes. Interacts with DNAAF4. Interacts with PRMT2. Interacts with CCAR2 (via N-terminus) in a ligand-independent manner. Interacts with RBM39, in the presence of estradiol (E2). Interacts with STUB1/CHIP. Phosphorylation at Ser-84 and Ser-102 recruits NCOA1.

The protein localises to the nucleus. Its function is as follows. Nuclear hormone receptor. Binds estrogens with an affinity similar to that of ESR1/ER-alpha, and activates expression of reporter genes containing estrogen response elements (ERE) in an estrogen-dependent manner. This is Estrogen receptor beta (ESR2) from Sus scrofa (Pig).